Consider the following 222-residue polypeptide: Prolactin-3B1 (222 aa).

The N-terminal stretch at methionine 1 to serine 31 is a signal peptide. Disulfide bonds link cysteine 82–cysteine 197 and cysteine 214–cysteine 222.

It belongs to the somatotropin/prolactin family.

It localises to the secreted. This chain is Prolactin-3B1 (Prl3b1), found in Mus musculus (Mouse).